A 319-amino-acid chain; its full sequence is HPr kinase/phosphorylase (319 aa).

Active-site residues include His-137 and Lys-158. 152–159 (GDSGVGKS) is a binding site for ATP. Ser-159 is a Mg(2+) binding site. Asp-176 serves as the catalytic Proton acceptor; for phosphorylation activity. Proton donor; for dephosphorylation activity. The interval 201–210 (MEIRGLGIIN) is important for the catalytic mechanism of both phosphorylation and dephosphorylation. Glu-202 lines the Mg(2+) pocket. Arg-243 is a catalytic residue. An important for the catalytic mechanism of dephosphorylation region spans residues 264–269 (PVRPGR).

Belongs to the HPrK/P family. As to quaternary structure, homohexamer. It depends on Mg(2+) as a cofactor.

It catalyses the reaction [HPr protein]-L-serine + ATP = [HPr protein]-O-phospho-L-serine + ADP + H(+). The enzyme catalyses [HPr protein]-O-phospho-L-serine + phosphate + H(+) = [HPr protein]-L-serine + diphosphate. Its function is as follows. Catalyzes the ATP- as well as the pyrophosphate-dependent phosphorylation of a specific serine residue in HPr, a phosphocarrier protein of the phosphoenolpyruvate-dependent sugar phosphotransferase system (PTS). HprK/P also catalyzes the pyrophosphate-producing, inorganic phosphate-dependent dephosphorylation (phosphorolysis) of seryl-phosphorylated HPr (P-Ser-HPr). In Treponema pallidum subsp. pallidum (strain SS14), this protein is HPr kinase/phosphorylase.